Reading from the N-terminus, the 368-residue chain is RNA polymerase sigma factor SigA (368 aa).

Residues 71 to 83 show a composition bias toward basic and acidic residues; that stretch reads NEKDSSDTDDKIN. Residues 71-90 are disordered; the sequence is NEKDSSDTDDKINPNDLSAP. The sigma-70 factor domain-2 stretch occupies residues 135-205; it reads LAEANLRLVV…TRAIADQART (71 aa). The short motif at 159–162 is the Interaction with polymerase core subunit RpoC element; the sequence is DLIQ. Positions 214 to 290 are sigma-70 factor domain-3; it reads ETINKLIRVQ…DQEAQSPSDH (77 aa). Positions 303 to 356 are sigma-70 factor domain-4; the sequence is VLDTLTDREENVLRLRFGLDDGRTRTLEEVGKVFGVTRERIRQIEAKALRKLRH. The segment at residues 329-348 is a DNA-binding region (H-T-H motif); sequence LEEVGKVFGVTRERIRQIEA.

This sequence belongs to the sigma-70 factor family. RpoD/SigA subfamily. As to quaternary structure, interacts transiently with the RNA polymerase catalytic core.

The protein localises to the cytoplasm. Its function is as follows. Sigma factors are initiation factors that promote the attachment of RNA polymerase to specific initiation sites and are then released. This sigma factor is the primary sigma factor during exponential growth. This is RNA polymerase sigma factor SigA from Staphylococcus epidermidis (strain ATCC 35984 / DSM 28319 / BCRC 17069 / CCUG 31568 / BM 3577 / RP62A).